Here is a 327-residue protein sequence, read N- to C-terminus: Cytochrome f (327 aa).

A signal peptide spans 1–24 (MKRIGLVFCALLLLLGMGARPAAA). Y25, C45, C48, and H49 together coordinate heme. Residues 293 to 313 (VKWLVAFLAAITITQVLLVLK) form a helical membrane-spanning segment.

It belongs to the cytochrome f family. In terms of assembly, the 4 large subunits of the cytochrome b6-f complex are cytochrome b6, subunit IV (17 kDa polypeptide, PetD), cytochrome f and the Rieske protein, while the 4 small subunits are PetG, PetL, PetM and PetN. The complex functions as a dimer. Heme serves as cofactor.

The protein localises to the cellular thylakoid membrane. Its function is as follows. Component of the cytochrome b6-f complex, which mediates electron transfer between photosystem II (PSII) and photosystem I (PSI), cyclic electron flow around PSI, and state transitions. The protein is Cytochrome f of Synechococcus sp. (strain JA-2-3B'a(2-13)) (Cyanobacteria bacterium Yellowstone B-Prime).